Consider the following 323-residue polypeptide: Sphingolipid delta(4)-desaturase/C4-monooxygenase DES2 (323 aa).

Residue G2 is the site of N-myristoyl glycine attachment. 2 helical membrane passes run 41 to 61 (PNIK…CWLV) and 68 to 88 (WLLF…TLAI). A Histidine box-1 motif is present at residues 89 to 93 (HDISH). The required for C4-hydroxylase activity stretch occupies residues 95-99 (TAFGT). The Histidine box-2 motif lies at 128 to 132 (HVDHH). The helical transmembrane segment at 200 to 220 (IFALWGIKAIVYLLASSLLGL) threads the bilayer. The Histidine box-3 signature appears at 259–263 (HVEHH).

The protein belongs to the fatty acid desaturase type 1 family. DEGS subfamily.

The protein localises to the endoplasmic reticulum membrane. The catalysed reaction is a dihydroceramide + 2 Fe(II)-[cytochrome b5] + O2 + 2 H(+) = a phytoceramide + 2 Fe(III)-[cytochrome b5] + H2O. It catalyses the reaction an N-acylsphinganine + 2 Fe(II)-[cytochrome b5] + O2 + 2 H(+) = an N-acylsphing-4-enine + 2 Fe(III)-[cytochrome b5] + 2 H2O. It carries out the reaction N-octanoylsphinganine + 2 Fe(II)-[cytochrome b5] + O2 + 2 H(+) = N-octanoyl-4-hydroxysphinganine + 2 Fe(III)-[cytochrome b5] + H2O. The enzyme catalyses an N-acylsphinganine + 2 Fe(II)-[cytochrome b5] + O2 + 2 H(+) = an N-acyl-(4R)-4-hydroxysphinganine + 2 Fe(III)-[cytochrome b5] + H2O. Its pathway is membrane lipid metabolism; sphingolipid biosynthesis. Its function is as follows. Bifunctional enzyme which acts both as a sphingolipid delta(4)-desaturase and a sphingolipid C4-monooxygenase. This chain is Sphingolipid delta(4)-desaturase/C4-monooxygenase DES2, found in Rattus norvegicus (Rat).